Here is a 228-residue protein sequence, read N- to C-terminus: 2-C-methyl-D-erythritol 4-phosphate cytidylyltransferase (228 aa).

This sequence belongs to the IspD/TarI cytidylyltransferase family. IspD subfamily.

It catalyses the reaction 2-C-methyl-D-erythritol 4-phosphate + CTP + H(+) = 4-CDP-2-C-methyl-D-erythritol + diphosphate. Its pathway is isoprenoid biosynthesis; isopentenyl diphosphate biosynthesis via DXP pathway; isopentenyl diphosphate from 1-deoxy-D-xylulose 5-phosphate: step 2/6. Functionally, catalyzes the formation of 4-diphosphocytidyl-2-C-methyl-D-erythritol from CTP and 2-C-methyl-D-erythritol 4-phosphate (MEP). The sequence is that of 2-C-methyl-D-erythritol 4-phosphate cytidylyltransferase from Geobacillus thermodenitrificans (strain NG80-2).